The following is an 83-amino-acid chain: Small ribosomal subunit protein bS16 (83 aa).

The protein belongs to the bacterial ribosomal protein bS16 family.

This chain is Small ribosomal subunit protein bS16, found in Herminiimonas arsenicoxydans.